The primary structure comprises 557 residues: Potassium-transporting ATPase potassium-binding subunit (557 aa).

12 helical membrane-spanning segments follow: residues 5–25, 63–83, 132–152, 170–190, 253–273, 283–303, 329–349, 356–376, 379–399, 416–436, 484–504, and 526–546; these read GFLL…PLGS, LCAI…MLLG, GLTV…FALI, LLRI…LFFI, FVQM…FGEV, LLWA…WAEV, VLVS…AVIA, ALGG…FGGV, GLYG…LMIG, LTAL…ALAM, LLAF…MAIA, and LFVG…FIPA.

It belongs to the KdpA family. In terms of assembly, the system is composed of three essential subunits: KdpA, KdpB and KdpC.

It is found in the cell inner membrane. Functionally, part of the high-affinity ATP-driven potassium transport (or Kdp) system, which catalyzes the hydrolysis of ATP coupled with the electrogenic transport of potassium into the cytoplasm. This subunit binds the periplasmic potassium ions and delivers the ions to the membrane domain of KdpB through an intramembrane tunnel. The chain is Potassium-transporting ATPase potassium-binding subunit from Escherichia coli O157:H7.